A 565-amino-acid chain; its full sequence is Protein priB (565 aa).

Positions 20–50 form a DNA-binding region, zn(2)-C6 fungal-type; it reads CTTCRAAKMKCVGAEDGQRQCQRCKRANVQC. Disordered stretches follow at residues 82-170 and 195-224; these read AKSK…SDRA and NPEDAPASGPSSVRCSETYSPPQSPAAPAG. Positions 90–111 are enriched in basic and acidic residues; it reads DARHSSSYRDSHPSLGEPDDRY. Residues 129–155 show a composition bias toward low complexity; sequence SNLPPLNLPSYPDAASEYTASSTSSRT. The segment covering 203-215 has biased composition (polar residues); that stretch reads GPSSVRCSETYSP.

The protein localises to the nucleus. The chain is Protein priB (priB) from Lentinula edodes (Shiitake mushroom).